Reading from the N-terminus, the 671-residue chain is UvrABC system protein B (671 aa).

A Helicase ATP-binding domain is found at 26–183 (EGLENGLAHQ…RRLSELQYSR (158 aa)). 39 to 46 (GVTGSGKT) lines the ATP pocket. Residues 92–115 (YYDYYQPEAYVPSSDTFIEKDASV) carry the Beta-hairpin motif. One can recognise a Helicase C-terminal domain in the interval 431-597 (QVDDLLSEIR…GLNKKIGDIL (167 aa)). One can recognise a UVR domain in the interval 631-666 (DQKIRELEAKMYTYAQNLEFEQAAELRDQVHQLRQQ).

It belongs to the UvrB family. As to quaternary structure, forms a heterotetramer with UvrA during the search for lesions. Interacts with UvrC in an incision complex.

It localises to the cytoplasm. In terms of biological role, the UvrABC repair system catalyzes the recognition and processing of DNA lesions. A damage recognition complex composed of 2 UvrA and 2 UvrB subunits scans DNA for abnormalities. Upon binding of the UvrA(2)B(2) complex to a putative damaged site, the DNA wraps around one UvrB monomer. DNA wrap is dependent on ATP binding by UvrB and probably causes local melting of the DNA helix, facilitating insertion of UvrB beta-hairpin between the DNA strands. Then UvrB probes one DNA strand for the presence of a lesion. If a lesion is found the UvrA subunits dissociate and the UvrB-DNA preincision complex is formed. This complex is subsequently bound by UvrC and the second UvrB is released. If no lesion is found, the DNA wraps around the other UvrB subunit that will check the other stand for damage. The sequence is that of UvrABC system protein B from Yersinia pseudotuberculosis serotype IB (strain PB1/+).